The primary structure comprises 380 residues: cAMP-dependent protein kinase type I-alpha regulatory subunit (380 aa).

M1 carries the post-translational modification N-acetylmethionine. At A2 the chain carries N-acetylalanine; in cAMP-dependent protein kinase type I-alpha regulatory subunit, N-terminally processed. A dimerization and phosphorylation region spans residues 2 to 135; it reads ASGTTASEEE…ALAKAIEKNV (134 aa). Phosphoserine occurs at positions 3, 76, and 82. Positions 64–96 are disordered; that stretch reads IQNLQKAGSRADSREDEISPPPPNPVVKGRRRR. The Pseudophosphorylation motif motif lies at 95–99; it reads RRGAI. The residue at position 100 (S100) is a Phosphoserine. Residues 136–253, E201, R210, 254–380, E325, and R334 each bind 3',5'-cyclic AMP; these read LFSH…SKVS and ILES…SLSV. S257 is subject to Phosphoserine.

Belongs to the cAMP-dependent kinase regulatory chain family. In terms of assembly, the inactive holoenzyme is composed of two regulatory chains and two catalytic chains. Activation by cAMP releases the two active catalytic monomers and the regulatory dimer. Interacts with PRKACA and PRKACB. PRKAR1A also interacts with RFC2; the complex may be involved in cell survival. Interacts with AKAP4. Interacts with RARA; the interaction occurs in the presence of cAMP or FSH and regulates RARA transcriptional activity. Interacts with the phosphorylated form of PJA2. Interacts with CBFA2T3. Interacts with PRKX; regulates this cAMP-dependent protein kinase. Interacts with smAKAP; this interaction may target PRKAR1A to the plasma membrane. Interacts with AICDA. The pseudophosphorylation site binds to the substrate-binding region of the catalytic chain, resulting in the inhibition of its activity. The physiological significance of the in vitro phosphorylation of a proximal serine is unclear. As to expression, four types of regulatory chains are found: I-alpha, I-beta, II-alpha, and II-beta. Their expression varies among tissues and is in some cases constitutive and in others inducible.

Its subcellular location is the cell membrane. Functionally, regulatory subunit of the cAMP-dependent protein kinases involved in cAMP signaling in cells. The protein is cAMP-dependent protein kinase type I-alpha regulatory subunit (PRKAR1A) of Bos taurus (Bovine).